A 279-amino-acid chain; its full sequence is Acetyl-coenzyme A carboxylase carboxyl transferase subunit beta (279 aa).

The 257-residue stretch at 23–279 folds into the CoA carboxyltransferase N-terminal domain; it reads LWSKCDECGA…LIKLFKHLRG (257 aa). The Zn(2+) site is built by cysteine 27, cysteine 30, cysteine 46, and cysteine 49. The C4-type zinc-finger motif lies at 27–49; that stretch reads CDECGAALHKKQLEDHLYTCPEC.

It belongs to the AccD/PCCB family. In terms of assembly, acetyl-CoA carboxylase is a heterohexamer composed of biotin carboxyl carrier protein (AccB), biotin carboxylase (AccC) and two subunits each of ACCase subunit alpha (AccA) and ACCase subunit beta (AccD). It depends on Zn(2+) as a cofactor.

The protein localises to the cytoplasm. The catalysed reaction is N(6)-carboxybiotinyl-L-lysyl-[protein] + acetyl-CoA = N(6)-biotinyl-L-lysyl-[protein] + malonyl-CoA. It participates in lipid metabolism; malonyl-CoA biosynthesis; malonyl-CoA from acetyl-CoA: step 1/1. Component of the acetyl coenzyme A carboxylase (ACC) complex. Biotin carboxylase (BC) catalyzes the carboxylation of biotin on its carrier protein (BCCP) and then the CO(2) group is transferred by the transcarboxylase to acetyl-CoA to form malonyl-CoA. The chain is Acetyl-coenzyme A carboxylase carboxyl transferase subunit beta from Chlorobaculum parvum (strain DSM 263 / NCIMB 8327) (Chlorobium vibrioforme subsp. thiosulfatophilum).